A 134-amino-acid chain; its full sequence is Probable glycine cleavage system H protein (134 aa).

The region spanning 29–110 is the Lipoyl-binding domain; sequence TVLVGITDYA…PYGAWIAKIK (82 aa). The residue at position 70 (Lys70) is an N6-lipoyllysine.

Belongs to the GcvH family. The glycine cleavage system is composed of four proteins: P, T, L and H. Requires (R)-lipoate as cofactor.

Its function is as follows. The glycine cleavage system catalyzes the degradation of glycine. The H protein shuttles the methylamine group of glycine from the P protein to the T protein. This chain is Probable glycine cleavage system H protein, found in Pyrococcus abyssi (strain GE5 / Orsay).